We begin with the raw amino-acid sequence, 1470 residues long: Histone acetyltransferase HAC4 (1470 aa).

Residues 1–10 (MNNNKEVPQN) are compositionally biased toward polar residues. 2 disordered regions span residues 1–20 (MNNNKEVPQNSVAVSSSSSA) and 342–376 (TNFQSAPNNRDNLPQVSQQLSNHGSRQHRGQHSQN). Low complexity predominate over residues 11 to 20 (SVAVSSSSSA). Residues 342 to 365 (TNFQSAPNNRDNLPQVSQQLSNHG) are compositionally biased toward polar residues. The TAZ-type 1 zinc finger occupies 416–495 (GQTSSNTVLR…SISCRTCVAV (80 aa)). The interval 518–566 (SSKCQPKKSSKSRQAYKKGGAEAPSVDADLQRSIKRPKLHRPSQNITPE) is disordered. Positions 522–533 (QPKKSSKSRQAY) are enriched in basic residues. Residues 764–841 (HYVCAPCYNE…KYTCPSCYIQ (78 aa)) form a PHD-type zinc finger. The CBP/p300-type HAT domain maps to 856–1293 (VPGATSLPVT…ILYHLHNPTA (438 aa)). Acetyl-CoA contacts are provided by residues 979-981 (LDS), 998-999 (RT), and W1054. 2 ZZ-type zinc fingers span residues 1175–1238 (HLQH…IKDV) and 1295–1347 (AFAT…SSTD). Zn(2+) is bound by residues C1180, C1183, C1195, C1198, C1204, C1207, H1220, H1228, C1300, C1303, C1315, C1318, C1324, C1327, H1335, and H1337. The TAZ-type 2 zinc-finger motif lies at 1358 to 1436 (SQSYQVKLEK…KCTVPKCSGL (79 aa)).

Rosette leaves, stems and flowers.

It is found in the nucleus. The catalysed reaction is L-lysyl-[protein] + acetyl-CoA = N(6)-acetyl-L-lysyl-[protein] + CoA + H(+). In terms of biological role, acetyltransferase enzyme. Acetylates histones, giving a specific tag for transcriptional activation. The polypeptide is Histone acetyltransferase HAC4 (HAC4) (Arabidopsis thaliana (Mouse-ear cress)).